The primary structure comprises 168 residues: Peptidoglycan-associated lipoprotein (168 aa).

A signal peptide spans 1–24 (MRRIQSIARSPIAIALFMSLAVAG). C25 carries the N-palmitoyl cysteine lipid modification. C25 carries the S-diacylglycerol cysteine lipid modification. The region spanning 51–167 (QDFTVNVGDR…RAVTVLNGAG (117 aa)) is the OmpA-like domain.

This sequence belongs to the Pal lipoprotein family. As to quaternary structure, the Tol-Pal system is composed of five core proteins: the inner membrane proteins TolA, TolQ and TolR, the periplasmic protein TolB and the outer membrane protein Pal. They form a network linking the inner and outer membranes and the peptidoglycan layer. In terms of processing, the N-terminus is blocked.

It localises to the cell outer membrane. Part of the Tol-Pal system, which plays a role in outer membrane invagination during cell division and is important for maintaining outer membrane integrity. This is Peptidoglycan-associated lipoprotein from Brucella abortus biovar 1 (strain 9-941).